The sequence spans 367 residues: MTNQDVVVSEMGIAAGAALPGGPAGPAGGLFACRSAAASMRQTYLDLAAAAVAARSASCTSWADAMRASSPTRSSRSASDVDEFTAWVRKHPSALSKFEEIAAKSRGKKIVMFMDYDGTLSPIVADPDTAYMSDAMRAAVREVAKTFPTAIVSGRCRDKVRNFVGLSDLYYAGSHGMDIKGPSSNPESALCQPASEFLPMIDEVYKTLVEKTKSTPGAKVENNKFCLSVHFRCVDEKRWNALGEQVKAVIKEYPKLKLTQGRKVLEIRPSIEWDKGKALEFLLESLGFANCGDVMPVYIGDDRTDEDAFKVLRKRGQGLGILVSKCPKDTNASYSLQDPTEVMEFLLRLVEWKRKSSSSSLMIRPRV.

The protein belongs to the trehalose phosphatase family. It depends on a divalent metal cation as a cofactor.

The enzyme catalyses alpha,alpha-trehalose 6-phosphate + H2O = alpha,alpha-trehalose + phosphate. It functions in the pathway glycan biosynthesis; trehalose biosynthesis. Removes the phosphate from trehalose 6-phosphate to produce free trehalose. Trehalose accumulation in plant may improve abiotic stress tolerance. In Oryza sativa subsp. japonica (Rice), this protein is Probable trehalose-phosphate phosphatase 4 (TPP4).